The primary structure comprises 341 residues: Heme A synthase (341 aa).

8 consecutive transmembrane segments (helical) span residues 8–28 (VIIWLLSGCVLLFLMVVVGGI), 92–112 (FHRFIGRIIGLVFFVPFVYFL), 126–146 (IVLLAMGAFQGFLGWFMVRSG), 160–180 (LHLTFAFITFAYTLWVALDLI), 201–221 (AALLIQIIYGGFVAGLNAGLI), 256–276 (VQFVHRTFAYAVVAVILFLFF), 294–314 (LVVFVFIQFLLGVFTLLYSVP), and 315–335 (LALGLIHQIMAFFLLSAMTYT). His260 serves as a coordination point for heme. His321 contributes to the heme binding site.

The protein belongs to the COX15/CtaA family. Type 2 subfamily. Interacts with CtaB. The cofactor is heme b.

Its subcellular location is the cell membrane. The catalysed reaction is Fe(II)-heme o + 2 A + H2O = Fe(II)-heme a + 2 AH2. It functions in the pathway porphyrin-containing compound metabolism; heme A biosynthesis; heme A from heme O: step 1/1. In terms of biological role, catalyzes the conversion of heme O to heme A by two successive hydroxylations of the methyl group at C8. The first hydroxylation forms heme I, the second hydroxylation results in an unstable dihydroxymethyl group, which spontaneously dehydrates, resulting in the formyl group of heme A. This chain is Heme A synthase, found in Flavobacterium johnsoniae (strain ATCC 17061 / DSM 2064 / JCM 8514 / BCRC 14874 / CCUG 350202 / NBRC 14942 / NCIMB 11054 / UW101) (Cytophaga johnsonae).